Reading from the N-terminus, the 668-residue chain is Lebercilin-like protein (668 aa).

The interval serine 17 to alanine 44 is disordered. A compositionally biased stretch (basic and acidic residues) spans asparagine 22–arginine 31. 2 coiled-coil regions span residues leucine 148–glutamate 259 and alanine 305–isoleucine 336. The disordered stretch occupies residues tyrosine 351–serine 402. Positions proline 368–serine 380 are enriched in polar residues. Positions glutamate 420–valine 440 form a coiled coil. Disordered stretches follow at residues arginine 495–glutamine 520, leucine 533–serine 581, and serine 605–isoleucine 668. Polar residues predominate over residues alanine 546–histidine 558. Composition is skewed to basic and acidic residues over residues serine 560–serine 572 and glycine 621–histidine 632. Polar residues predominate over residues proline 633 to threonine 660.

Belongs to the LCA5 family.

The protein is Lebercilin-like protein of Macaca fascicularis (Crab-eating macaque).